The following is a 176-amino-acid chain: MWRLALGGVFLAAAQACVFCRLPAHDLSGRLARLCSQMEARQKECGASPDFSAFALDEVSMNKVTEKTHRVLRVMEIKEAVSSLPSYWSWLRKTKLPEYTREALCPPACRGSTTLYNCSTCKGTEVSCWPRKRCFPGSQDLWEAKILLLSIFGAFLLLGVLSLLVESHHLQAKSGL.

Residues 1–16 (MWRLALGGVFLAAAQA) form the signal peptide. Disulfide bonds link C17–C118, C20–C121, C105–C128, and C109–C134. At 17–145 (CVFCRLPAHD…PGSQDLWEAK (129 aa)) the chain is on the extracellular side. The helical transmembrane segment at 146 to 166 (ILLLSIFGAFLLLGVLSLLVE) threads the bilayer. Topologically, residues 167-176 (SHHLQAKSGL) are cytoplasmic.

Belongs to the TMEM95 family. Does not interact with sperm-egg fusion proteins IZUMO1 or IZUMO1R/JUNO. N-glycosylated. As to expression, spermatozoa (at protein level).

It is found in the cytoplasmic vesicle. The protein resides in the secretory vesicle. The protein localises to the acrosome membrane. In terms of biological role, sperm protein required for fusion of sperm with the egg membrane during fertilization. The polypeptide is Sperm-egg fusion protein TMEM95 (Homo sapiens (Human)).